Consider the following 134-residue polypeptide: Small ribosomal subunit protein uS11 (134 aa).

The interval Met-1 to Thr-22 is disordered. Positions Ala-9–Asn-18 are enriched in basic residues.

Belongs to the universal ribosomal protein uS11 family. As to quaternary structure, part of the 30S ribosomal subunit. Interacts with proteins S7 and S18. Binds to IF-3.

In terms of biological role, located on the platform of the 30S subunit, it bridges several disparate RNA helices of the 16S rRNA. Forms part of the Shine-Dalgarno cleft in the 70S ribosome. The chain is Small ribosomal subunit protein uS11 from Kocuria rhizophila (strain ATCC 9341 / DSM 348 / NBRC 103217 / DC2201).